We begin with the raw amino-acid sequence, 369 residues long: Cellular tumor antigen p53 (369 aa).

The transcription activation (acidic) stretch occupies residues M1–I28. The DNA-binding element occupies D66 to D256. 4 residues coordinate Zn(2+): C140, H143, C202, and C206. The tract at residues R237–R244 is interaction with DNA. Basic and acidic residues predominate over residues R246–D263. Disordered stretches follow at residues R246–S296 and N318–D369. Residues N269–V281 show a composition bias toward polar residues. A Bipartite nuclear localization signal motif is present at residues K270–K289. An oligomerization region spans residues E298–P329. Positions E312 to L323 match the Nuclear export signal motif. The interval K342 to K365 is basic (repression of DNA-binding). The span at K346 to D369 shows a compositional bias: basic and acidic residues.

The protein belongs to the p53 family. In terms of assembly, binds DNA as a homotetramer. The cofactor is Zn(2+).

The protein localises to the cytoplasm. It localises to the nucleus. Functionally, multifunctional transcription factor that induces cell cycle arrest, DNA repair or apoptosis upon binding to its target DNA sequence. Acts as a tumor suppressor in many tumor types; induces growth arrest or apoptosis depending on the physiological circumstances and cell type. Negatively regulates cell division by controlling expression of a set of genes required for this process. One of the activated genes is an inhibitor of cyclin-dependent kinases. Apoptosis induction seems to be mediated either by stimulation of BAX and FAS antigen expression, or by repression of Bcl-2 expression. In Barbus barbus (Barbel), this protein is Cellular tumor antigen p53 (tp53).